The chain runs to 716 residues: Probable basic-leucine zipper transcription factor O (716 aa).

A coiled-coil region spans residues 20–142 (LLDDFSQLQQ…YQQRQQQYQD (123 aa)). The interval 173–233 (SINYNMNNNN…NNKTTDNINN (61 aa)) is disordered. The bZIP domain occupies 381 to 444 (KSTESIKKMN…SVDLMKPSND (64 aa)). The segment at 387 to 403 (KKMNQNKASRNYRQKKK) is basic motif. Residues 406–413 (IKEIEDKL) are leucine-zipper.

It belongs to the bZIP family.

The protein resides in the nucleus. Functionally, probable transcriptional regulator. In Dictyostelium discoideum (Social amoeba), this protein is Probable basic-leucine zipper transcription factor O (bzpO).